The primary structure comprises 449 residues: Phosphoglucosamine mutase (449 aa).

Ser101 serves as the catalytic Phosphoserine intermediate. Ser101, Asp241, Asp243, and Asp245 together coordinate Mg(2+). The residue at position 101 (Ser101) is a Phosphoserine.

The protein belongs to the phosphohexose mutase family. Requires Mg(2+) as cofactor. Activated by phosphorylation.

It carries out the reaction alpha-D-glucosamine 1-phosphate = D-glucosamine 6-phosphate. Functionally, catalyzes the conversion of glucosamine-6-phosphate to glucosamine-1-phosphate. The protein is Phosphoglucosamine mutase of Alkaliphilus oremlandii (strain OhILAs) (Clostridium oremlandii (strain OhILAs)).